Consider the following 76-residue polypeptide: MNKAFFLCLVVLCAAVVFAAEDLQKGKHAPFKRAAPCFCSGNPGRGDLWILRGPSPGGYGYTSNCYKWPNICCFPP.

Residues 1–19 (MNKAFFLCLVVLCAAVVFA) form the signal peptide. The propeptide occupies 20 to 31 (AEDLQKGKHAPF). Cystine bridges form between Cys-37–Cys-72 and Cys-39–Cys-65.

Belongs to the sea anemone type 3 (BDS) potassium channel toxin family. In terms of processing, lacks the conventional Cys residue at position 55. Thus, only 2 disulfide are possible present. As to expression, experimental results show no expression in the ectodermal tissue from the distal and proximal tentacles, body wall, and oral disk. Since paralogs are expressed in this tissue, an expression of this toxin in this tissue is probable. The negative results could be explained by the very low abundance of EST sequences.

The protein localises to the secreted. Its subcellular location is the nematocyst. In terms of biological role, blocks Kv3 voltage-gated potassium channels. Reduces blood pressure. The polypeptide is Kappa-actitoxin-Avd4n (Anemonia viridis (Snakelocks anemone)).